We begin with the raw amino-acid sequence, 612 residues long: C4-dicarboxylate transport sensor protein DctB (612 aa).

2 consecutive transmembrane segments (helical) span residues 23–43 and 292–312; these read SLVI…YFAE and VLLI…LLTL. Residues 328–376 are a coiled coil; sequence KRQLEERVLERTRELENANAQLQQEVHEREQAQRELMRAQDEVVQAGKL. A Histidine kinase domain is found at 385-599; the sequence is SISHELNQPL…VVRLHLLPGV (215 aa). His388 carries the post-translational modification Phosphohistidine; by autocatalysis.

Autophosphorylated.

It localises to the cell inner membrane. It carries out the reaction ATP + protein L-histidine = ADP + protein N-phospho-L-histidine.. In terms of biological role, member of the two-component regulatory system DctB/DctD, which regulates C4-dicarboxylate transport via regulation of expression of the dctPQM operon and dctA. DctB functions as a membrane-associated protein kinase that phosphorylates DctD in response to environmental signals. The polypeptide is C4-dicarboxylate transport sensor protein DctB (Pseudomonas aeruginosa (strain ATCC 15692 / DSM 22644 / CIP 104116 / JCM 14847 / LMG 12228 / 1C / PRS 101 / PAO1)).